The following is a 437-amino-acid chain: FK506-binding protein 3 (437 aa).

3 stretches are compositionally biased toward acidic residues: residues 73-90 (DIEAEEADELDSEEEEEE), 106-131 (EEEEDEDEEDLDIDGSSDEEDDEDVS), and 179-220 (ADED…DASD). Disordered regions lie at residues 73 to 132 (DIEA…DVSE) and 169 to 349 (HLTG…QTAK). 2 stretches are compositionally biased toward basic and acidic residues: residues 256–270 (KKEDKKSVQFTKDLE) and 292–324 (AKKEEPKKEEPKKEQPKKEQPKKEQPKKEEASK). In terms of domain architecture, PPIase FKBP-type spans 351–437 (GNKVGIRYIG…TFDIKLVSIK (87 aa)).

The protein belongs to the FKBP-type PPIase family. FKBP3/4 subfamily.

The protein resides in the nucleus. It localises to the nucleolus. It catalyses the reaction [protein]-peptidylproline (omega=180) = [protein]-peptidylproline (omega=0). With respect to regulation, inhibited by both FK506 and rapamycin. In terms of biological role, PPIases accelerate the folding of proteins. It catalyzes the cis-trans isomerization of proline imidic peptide bonds in oligopeptides. The polypeptide is FK506-binding protein 3 (FPR3) (Debaryomyces hansenii (strain ATCC 36239 / CBS 767 / BCRC 21394 / JCM 1990 / NBRC 0083 / IGC 2968) (Yeast)).